A 118-amino-acid chain; its full sequence is Large ribosomal subunit protein uL24 (118 aa).

Belongs to the universal ribosomal protein uL24 family. As to quaternary structure, part of the 50S ribosomal subunit.

Functionally, one of two assembly initiator proteins, it binds directly to the 5'-end of the 23S rRNA, where it nucleates assembly of the 50S subunit. One of the proteins that surrounds the polypeptide exit tunnel on the outside of the subunit. This is Large ribosomal subunit protein uL24 from Prochlorococcus marinus (strain SARG / CCMP1375 / SS120).